Consider the following 205-residue polypeptide: Lymphotoxin-alpha (205 aa).

Positions 1-34 (MTPPGRLYLPRVRGTRLLFLLLGLLLALPPRAKG) are cleaved as a signal peptide. The 143-residue stretch at 63 to 205 (PAAHLVGDPS…SSVFFGAFAL (143 aa)) folds into the THD domain. N-linked (GlcNAc...) asparagine glycosylation is present at N96. Cysteines 120 and 156 form a disulfide.

This sequence belongs to the tumor necrosis factor family. In terms of assembly, homotrimer, and heterotrimer of either two LTB and one LTA subunits or (less prevalent) two LTA and one LTB subunits. Interacts with TNFRSF14.

It is found in the secreted. It localises to the membrane. Cytokine that in its homotrimeric form binds to TNFRSF1A/TNFR1, TNFRSF1B/TNFBR and TNFRSF14/HVEM. In its heterotrimeric form with LTB binds to TNFRSF3/LTBR. Lymphotoxin is produced by lymphocytes and is cytotoxic for a wide range of tumor cells in vitro and in vivo. The protein is Lymphotoxin-alpha (LTA) of Marmota monax (Woodchuck).